The sequence spans 305 residues: Tyrosine recombinase XerC (305 aa).

The region spanning 4-95 is the Core-binding (CB) domain; sequence TSIQELIDKW…AVKNFYRFLE (92 aa). The Tyr recombinase domain maps to 116–298; sequence LLPKALSEDD…SIKHLEAVYT (183 aa). Catalysis depends on residues R159, K182, H250, R253, and H276. Y285 (O-(3'-phospho-DNA)-tyrosine intermediate) is an active-site residue.

The protein belongs to the 'phage' integrase family. XerC subfamily. In terms of assembly, forms a cyclic heterotetrameric complex composed of two molecules of XerC and two molecules of XerD.

Its subcellular location is the cytoplasm. In terms of biological role, site-specific tyrosine recombinase, which acts by catalyzing the cutting and rejoining of the recombining DNA molecules. The XerC-XerD complex is essential to convert dimers of the bacterial chromosome into monomers to permit their segregation at cell division. It also contributes to the segregational stability of plasmids. In Rickettsia felis (strain ATCC VR-1525 / URRWXCal2) (Rickettsia azadi), this protein is Tyrosine recombinase XerC.